The chain runs to 289 residues: ADP-dependent (S)-NAD(P)H-hydrate dehydratase (289 aa).

One can recognise a YjeF C-terminal domain in the interval 9–286; that stretch reads VTAAALRAQP…PEVPGILDRL (278 aa). Positions 44 and 160 each coordinate (6S)-NADPHX. Residues 197–201 and Gly-226 contribute to the AMP site; that span reads KGADS. Residue Asp-227 coordinates (6S)-NADPHX.

The protein belongs to the NnrD/CARKD family. As to quaternary structure, homotetramer. The cofactor is Mg(2+).

The enzyme catalyses (6S)-NADHX + ADP = AMP + phosphate + NADH + H(+). It catalyses the reaction (6S)-NADPHX + ADP = AMP + phosphate + NADPH + H(+). Functionally, catalyzes the dehydration of the S-form of NAD(P)HX at the expense of ADP, which is converted to AMP. Together with NAD(P)HX epimerase, which catalyzes the epimerization of the S- and R-forms, the enzyme allows the repair of both epimers of NAD(P)HX, a damaged form of NAD(P)H that is a result of enzymatic or heat-dependent hydration. The polypeptide is ADP-dependent (S)-NAD(P)H-hydrate dehydratase (Xanthomonas campestris pv. campestris (strain ATCC 33913 / DSM 3586 / NCPPB 528 / LMG 568 / P 25)).